We begin with the raw amino-acid sequence, 141 residues long: uncharacterized protein (141 aa).

Residues 1–101 (FRGRAPRPLV…PDPGRSRRAT (101 aa)) are disordered. A compositionally biased stretch (basic and acidic residues) spans 27–70 (QVRDCGREGDLRAGKAADRRLPRARETCSRFGEGVRQKDVHKGP).

This is an uncharacterized protein from Dhori virus (strain Indian/1313/61) (Dho).